Consider the following 490-residue polypeptide: Beta-glucosidase 42 (490 aa).

Residues Q35, H137, 182–183, Y317, and E388 each bind a beta-D-glucoside; that span reads NE. Catalysis depends on E183, which acts as the Proton donor. E388 acts as the Nucleophile in catalysis. The N-linked (GlcNAc...) asparagine glycan is linked to N420. Residues W437, 444 to 445, and F453 contribute to the a beta-D-glucoside site; that span reads EW.

This sequence belongs to the glycosyl hydrolase 1 family. In terms of tissue distribution, expressed at low levels predominantly in root epidermal cells.

The catalysed reaction is Hydrolysis of terminal, non-reducing beta-D-glucosyl residues with release of beta-D-glucose.. Its function is as follows. Glucosidase that hydrolyzes scopolin and various beta-glucosides, cellooligosaccharides (mainly cellotriose) and laminarioligosaccharides. Can use p-nitrophenyl-beta-glucosides (pNP beta-Glc) and p-nitrophenyl-beta-D-fucosides (pNP beta-D-Fuc) as substrates, and, to a lower extent, beta-galactosides, beta-mannosides and beta-xylosides. Involved in the secretion of root-derived phenolics upon iron ions (Fe) depletion. Promotes disease resistance toward B.cinerea, H.arabidopsidis and P.syringae pv. tomato DC3000. Required during rhizobacteria-mediated (e.g. P.fluorescens WCS417r) broad-spectrum induced systemic resistance (ISR) against several pathogens. In Arabidopsis thaliana (Mouse-ear cress), this protein is Beta-glucosidase 42.